A 109-amino-acid polypeptide reads, in one-letter code: Large ribosomal subunit protein uL23 (109 aa).

Belongs to the universal ribosomal protein uL23 family. As to quaternary structure, part of the 50S ribosomal subunit. Contacts protein L29, and trigger factor when it is bound to the ribosome.

Its function is as follows. One of the early assembly proteins it binds 23S rRNA. One of the proteins that surrounds the polypeptide exit tunnel on the outside of the ribosome. Forms the main docking site for trigger factor binding to the ribosome. In Chlorobium phaeobacteroides (strain BS1), this protein is Large ribosomal subunit protein uL23.